We begin with the raw amino-acid sequence, 973 residues long: UvrABC system protein A (973 aa).

Residue 34 to 41 (GLSGSGKS) participates in ATP binding. ABC transporter domains lie at 330–609 (WAKS…PNSI) and 629–958 (AKKN…QFLK). 662-669 (GVSGGGKS) is a binding site for ATP. The segment at 761-787 (CEACQGDGVIKIEMHFLPDVYVTCDVC) adopts a C4-type zinc-finger fold.

This sequence belongs to the ABC transporter superfamily. UvrA family. In terms of assembly, forms a heterotetramer with UvrB during the search for lesions.

The protein resides in the cytoplasm. The UvrABC repair system catalyzes the recognition and processing of DNA lesions. UvrA is an ATPase and a DNA-binding protein. A damage recognition complex composed of 2 UvrA and 2 UvrB subunits scans DNA for abnormalities. When the presence of a lesion has been verified by UvrB, the UvrA molecules dissociate. This is UvrABC system protein A from Mesorhizobium japonicum (strain LMG 29417 / CECT 9101 / MAFF 303099) (Mesorhizobium loti (strain MAFF 303099)).